We begin with the raw amino-acid sequence, 357 residues long: Glutamate 5-kinase (357 aa).

Residue Lys7 participates in ATP binding. Residues Ser43, Asp130, and Asn142 each contribute to the substrate site. ATP contacts are provided by residues 162-163 (TD) and 205-211 (TGGMTTK). The PUA domain occupies 270–341 (EGELCLDQGA…QALSVVTDAE (72 aa)).

This sequence belongs to the glutamate 5-kinase family.

The protein localises to the cytoplasm. The enzyme catalyses L-glutamate + ATP = L-glutamyl 5-phosphate + ADP. Its pathway is amino-acid biosynthesis; L-proline biosynthesis; L-glutamate 5-semialdehyde from L-glutamate: step 1/2. Catalyzes the transfer of a phosphate group to glutamate to form L-glutamate 5-phosphate. The chain is Glutamate 5-kinase from Synechococcus sp. (strain CC9902).